Reading from the N-terminus, the 396-residue chain is L-lactate dehydrogenase (396 aa).

In terms of domain architecture, FMN hydroxy acid dehydrogenase spans 1–380 (MIISAASDYR…SGDSLVQELG (380 aa)). Tyr24 contacts substrate. Ser106 and Gln127 together coordinate FMN. Tyr129 is a binding site for substrate. Residue Thr155 coordinates FMN. Arg164 serves as a coordination point for substrate. Residue Lys251 coordinates FMN. His275 acts as the Proton acceptor in catalysis. Arg278 contacts substrate. Position 306-330 (306-330 (DSGIRNGLDVVRMIALGADTVLLGR)) interacts with FMN.

Belongs to the FMN-dependent alpha-hydroxy acid dehydrogenase family. FMN serves as cofactor.

The protein resides in the cell inner membrane. The catalysed reaction is (S)-lactate + A = pyruvate + AH2. In terms of biological role, catalyzes the conversion of L-lactate to pyruvate. Is coupled to the respiratory chain. This Salmonella newport (strain SL254) protein is L-lactate dehydrogenase.